We begin with the raw amino-acid sequence, 194 residues long: Outer surface 22 kDa lipoprotein (194 aa).

The signal sequence occupies residues 1–21 (MYKNGFFKNYLSLFLIFLVIA). A lipid anchor (N-palmitoyl cysteine) is attached at Cys-22. Cys-22 carries S-diacylglycerol cysteine lipidation.

It localises to the cell outer membrane. The chain is Outer surface 22 kDa lipoprotein (p22) from Borreliella burgdorferi (strain ZS7) (Borrelia burgdorferi).